The sequence spans 57 residues: uncharacterized protein (57 aa).

This is an uncharacterized protein from Haemophilus influenzae (strain ATCC 51907 / DSM 11121 / KW20 / Rd).